A 149-amino-acid polypeptide reads, in one-letter code: Transcriptional repressor NrdR (149 aa).

A zinc finger lies at 3–34 (CPFCSENDTKVIDSRLVADGHQVRRRRQCLAC). The ATP-cone domain maps to 49 to 139 (PKVIKSNGNR…VYRSFEDIRE (91 aa)).

It belongs to the NrdR family. Zn(2+) is required as a cofactor.

Its function is as follows. Negatively regulates transcription of bacterial ribonucleotide reductase nrd genes and operons by binding to NrdR-boxes. This is Transcriptional repressor NrdR from Vibrio vulnificus (strain YJ016).